Here is a 443-residue protein sequence, read N- to C-terminus: ATP-dependent protease ATPase subunit HslU (443 aa).

ATP contacts are provided by residues isoleucine 18, 60–65, aspartate 256, glutamate 321, and arginine 393; that span reads GVGKTE.

This sequence belongs to the ClpX chaperone family. HslU subfamily. A double ring-shaped homohexamer of HslV is capped on each side by a ring-shaped HslU homohexamer. The assembly of the HslU/HslV complex is dependent on binding of ATP.

It is found in the cytoplasm. Functionally, ATPase subunit of a proteasome-like degradation complex; this subunit has chaperone activity. The binding of ATP and its subsequent hydrolysis by HslU are essential for unfolding of protein substrates subsequently hydrolyzed by HslV. HslU recognizes the N-terminal part of its protein substrates and unfolds these before they are guided to HslV for hydrolysis. This Escherichia coli O139:H28 (strain E24377A / ETEC) protein is ATP-dependent protease ATPase subunit HslU.